Consider the following 824-residue polypeptide: MDRLVDRDISASMFTATSHDPLPTHVRTVVVGGGIIGASIAYHLSAAGENDTLLLESNVLGSGTSWHAAGLVTGARGTTTMTKLAKYGLDFYSRLEQMSGLDVSFQRCGSLSVARTAGRVDELLYAKDVADQQGVRTEWLTEDRYKELWPLATYSGVAGALLLPDDGHINPGHATVALAKLAHSLGTQIRENVAVHKVLRQGDLVVGVLTDQGIVHCDRVILACGLWTRDLAATAGVKVPLYAAEHIHVRSAEIDGAVPELPVYRDLDNSYYIRHEAGRLLVGAFEPDGLPRPVEEIPSNGFAEFGPEWEHFAPIRAKAEGVVPALASAGFDRFLNAPESFTPDANFAVGETSELSNLFVAAGFNSQGIIFAPGIGKELAEWVISGTPGFDSSAVDVQRFSGHQNNRNYLKARTKEGLGRLYAMHWPNLQMETGRNVRRTPLHARLAELGACFGEVNGGERANWYGAPGTSPTYDYSYGRPNWFDRVAEEHKAAREGVVLFDLSPFAKFEVAGPDALEVCQMAATADIDVETDKAVYTLFLNDRAGIELDGTITRLGLDRFLVVTPSFTQQKTAAYLKRIARGKAAAVFDCTAALATIGVMGPKSRELLSRISPEDWSDEAQRYTHGRMVEIADGYAYSLRVSFVGELGYELYPSADMAVNVLDALWEAGQDLGLKLAGYHALDSLRSEKGFRHLGHDIGPIDDPYSAGLRFTISMDKPGGFLGKDALLKLDPTAPDHRTVYVALEDPDPVFVHDETVYCNGLPVGRMTSGSYGHTLGRAVGIAALEPDADLSGDFEVQCKGRLYPAKVSRRPFYDPKGERLRG.

His67 bears the Pros-8alpha-FAD histidine mark.

Belongs to the GcvT family. The cofactor is FAD.

It catalyses the reaction 4-(methylamino)butanoate + O2 + H2O = 4-aminobutanoate + formaldehyde + H2O2. It participates in alkaloid degradation; nicotine degradation. Its function is as follows. Catalyzes the oxidative demethylation of 4-methylaminobutanoate produced from the pyrrolidine ring of nicotine. To a much lesser extent, can also use sarcosine as substrate, but is not active against dimethylglycine, methylaminopropionitrile, methylaminopropylamine, and alpha-methylaminobutanoate. This Paenarthrobacter nicotinovorans (Arthrobacter nicotinovorans) protein is 4-methylaminobutanoate oxidase (formaldehyde-forming) (abo).